Here is a 1976-residue protein sequence, read N- to C-terminus: DNA-directed RNA polymerase V subunit 1 (1976 aa).

Zn(2+)-binding residues include C57, C60, C68, H71, C98, and C101. The Mg(2+) site is built by D449, D451, and D453. The interval 751-763 is bridging helix; the sequence is PYEEMAHSIAARE. Repeat unit 1 spans residues 1215–1216; that stretch reads WG. Residues 1215 to 1693 form an 18 X 2 AA repeats of [WG]-[GW] repeats region; sequence WGKRVDVGTG…AKKFPSSGGW (479 aa). 3 disordered regions span residues 1272 to 1291, 1298 to 1718, and 1847 to 1976; these read EEEM…LGEP, DFQN…EDNL, and FTKP…QTQT. Basic and acidic residues-rich tracts occupy residues 1281-1291 and 1298-1307; these read SPERDSALGEP and DFQNLHDEGK. Repeat 2 spans residues 1329–1330; it reads WG. Residues 1332–1348 are compositionally biased toward polar residues; it reads SKSTGGEANPESNWEKT. Residues 1349-1371 show a composition bias toward basic and acidic residues; the sequence is TNVEKEDAWSSWNTRKDAQESSK. 15 repeat units span residues 1378 to 1379, 1415 to 1416, 1430 to 1431, 1439 to 1440, 1447 to 1448, 1464 to 1465, 1498 to 1499, 1528 to 1529, 1545 to 1546, 1562 to 1563, 1596 to 1597, 1604 to 1605, 1621 to 1622, 1638 to 1639, and 1641 to 1642. The span at 1415-1430 shows a compositional bias: basic and acidic residues; the sequence is WGHKSVSDKSWDKKNW. Residues 1491–1501 are compositionally biased toward polar residues; the sequence is TESNGATWGSS. The span at 1648-1678 shows a compositional bias: basic and acidic residues; it reads AEDKDTNEDDRNPWVSLKETKSREKDDKERS. A run of 2 repeats spans residues 1680-1681 and 1692-1693. Over residues 1869-1878 the composition is skewed to polar residues; it reads EQSQPPNQSI. Residues 1886-1976 show a composition bias toward low complexity; the sequence is QTQTQSQSPS…SSQSPSQTQT (91 aa).

This sequence belongs to the RNA polymerase beta' chain family. In terms of assembly, component of the RNA polymerase V complex. Interacts with NRPD4, NRPD2A, and (via C-terminus) with AGO4. Interacts with SUVH2. In terms of tissue distribution, mostly expressed in flowers, and, to a lower extent, in leaves. Present in sperm cells.

It localises to the nucleus. It is found in the nucleolus. It carries out the reaction RNA(n) + a ribonucleoside 5'-triphosphate = RNA(n+1) + diphosphate. Functionally, DNA-dependent RNA polymerase catalyzes the transcription of DNA into RNA using the four ribonucleoside triphosphates as substrates. Largest and catalytic component of RNA polymerase V involved in RNA-directed DNA methylation-dependent (RdDM) silencing of endogenous repeated sequences, including transposable elements. Also required for full erasure of methylation when the RNA trigger is withdrawn. Seems also involved in the synthesis of short-interfering RNAs (siRNA). Essential component of a self-reinforcing loop coupling de novo DNA methylation to siRNA production. Involved in the maintenance of post-transcriptional RNA silencing. The sequence is that of DNA-directed RNA polymerase V subunit 1 (NRPE1) from Arabidopsis thaliana (Mouse-ear cress).